Reading from the N-terminus, the 408-residue chain is MLRHLAGASALALTLAGAGFAQDHDHDHEDVTLYRVFVGDHEKGQVTAFDLAEPDHRWTFPTTGQVKLYSVAGGAVVAAVQSDADTVQFIRSGISFHDHGDHRDIEVGDPAAIDASLTGPRPFHLVEHDGKVVLNYDQGGYAEILDGHALAEGKAEPGRFPQARAHHGFVAPLGGNWLSTVASDEKVEGDASVPRLGLQAFDAEGNPAGNLATCTGIHGEAFSGAYLAAGCKEGVLTVKAGANGSEYKLLPYPADLPQGVTTGTLLGSTGIQVFLGNYGPDGLVVIDPVDEPHYRYIKLPFRRVDFALDPAKPSTGYVLTEDGSLHRIDLLKAEIVASAKVTEPYSMDGHWNDPRPRIAMAGDEIVVTDPNAGLVRRIATEDLSERGTVPVEGKPYNIAVTGGSGVTH.

The first 21 residues, 1–21, serve as a signal peptide directing secretion; it reads MLRHLAGASALALTLAGAGFA. An N-terminal Zn(2+)-binding motif; binds a third Zn(2+) with low affinity motif is present at residues 23–29; it reads DHDHDHE. Zn(2+) contacts are provided by His99, His102, Asp104, His124, His167, His218, and His408. Cys214 and Cys231 are disulfide-bonded.

Monomer.

Its subcellular location is the periplasm. In terms of biological role, acts as a zinc chaperone in the AztABCD zinc transport system. Directly transfers one zinc cation to the solute binding protein AztC; the transfer occurs without the formation of a stable interaction. Binds 3 Zn(2+), two with high affinity and one with low affinity, and transfers only Zn(2+) bound to site 2 to AztC. Likely functions to store zinc in the periplasm and may be important for zinc accumulation in zinc-limited environments. The sequence is that of Zinc chaperone AztD from Paracoccus denitrificans (strain Pd 1222).